An 847-amino-acid polypeptide reads, in one-letter code: Putative membrane protein SCO5905 (847 aa).

12 helical membrane-spanning segments follow: residues 18 to 38 (AVVV…APAL), 187 to 207 (GGDK…LLAI), 215 to 235 (LVPL…GAIL), 248 to 268 (ASIM…IITA), 302 to 322 (IVLA…GFGP), 326 to 346 (LGVA…VLLL), 381 to 401 (VKVA…LLGY), 539 to 559 (DTTL…VLLL), 562 to 582 (LLAP…TLGA), 600 to 620 (VTAY…IFIM), 643 to 663 (TGGV…VLMT), and 672 to 692 (FGFA…PLLV). The interval 708-729 (RPGTPQTPSTPTSEPPSADAPA) is disordered. The next 3 helical transmembrane spans lie at 744 to 764 (FTWI…GMYL), 778 to 798 (FGTL…LVAI), and 808 to 828 (TIFA…EIWA).

The protein belongs to the resistance-nodulation-cell division (RND) (TC 2.A.6) family. MmpL subfamily.

It localises to the cell membrane. The chain is Putative membrane protein SCO5905 from Streptomyces coelicolor (strain ATCC BAA-471 / A3(2) / M145).